We begin with the raw amino-acid sequence, 228 residues long: UPF0758 protein H16_A3033 (228 aa).

The MPN domain maps to 102 to 224 (GFDGPAAVRN…IRSLADCCDR (123 aa)). 3 residues coordinate Zn(2+): histidine 173, histidine 175, and aspartate 186. Residues 173 to 186 (HNHPRGTTAPSQSD) carry the JAMM motif motif.

The protein belongs to the UPF0758 family.

The protein is UPF0758 protein H16_A3033 of Cupriavidus necator (strain ATCC 17699 / DSM 428 / KCTC 22496 / NCIMB 10442 / H16 / Stanier 337) (Ralstonia eutropha).